A 189-amino-acid polypeptide reads, in one-letter code: Recombination protein RecR (189 aa).

The C4-type zinc-finger motif lies at 48–63; that stretch reads CQTCFHLSAEPLCDIC. A Toprim domain is found at 71 to 165; sequence QLLCVVADSR…QVSRIAYGLP (95 aa).

The protein belongs to the RecR family.

In terms of biological role, may play a role in DNA repair. It seems to be involved in an RecBC-independent recombinational process of DNA repair. It may act with RecF and RecO. This is Recombination protein RecR from Prochlorococcus marinus (strain MIT 9313).